A 551-amino-acid polypeptide reads, in one-letter code: Urocanate hydratase (551 aa).

NAD(+)-binding positions include 48-49 (GG), Gln-126, 172-174 (GMG), Glu-192, Arg-197, 238-239 (NA), 259-263 (QTSAH), 269-270 (YI), and Tyr-318. The active site involves Cys-406. Residue Gly-488 participates in NAD(+) binding.

Belongs to the urocanase family. NAD(+) is required as a cofactor.

The protein resides in the cytoplasm. The catalysed reaction is 4-imidazolone-5-propanoate = trans-urocanate + H2O. It functions in the pathway amino-acid degradation; L-histidine degradation into L-glutamate; N-formimidoyl-L-glutamate from L-histidine: step 2/3. Its function is as follows. Catalyzes the conversion of urocanate to 4-imidazolone-5-propionate. In Symbiobacterium thermophilum (strain DSM 24528 / JCM 14929 / IAM 14863 / T), this protein is Urocanate hydratase.